Consider the following 136-residue polypeptide: Glutaredoxin-C8 (136 aa).

Positions 33-135 constitute a Glutaredoxin domain; it reads SSFVKSTVKA…KLLNIDVKED (103 aa). Cys53 and Cys56 are joined by a disulfide.

This sequence belongs to the glutaredoxin family. CPYC subfamily.

It localises to the cytoplasm. Has a glutathione-disulfide oxidoreductase activity in the presence of NADPH and glutathione reductase. Reduces low molecular weight disulfides and proteins. This chain is Glutaredoxin-C8 (GRXC8), found in Oryza sativa subsp. japonica (Rice).